The primary structure comprises 384 residues: Neuropeptide Y receptor type 1 (384 aa).

Topologically, residues 1–44 are extracellular; the sequence is MNSTLFSQVENHSVHSNFSEKNAQLLAFENDDCHLPLAMIFTLA. 3 N-linked (GlcNAc...) asparagine glycosylation sites follow: N2, N11, and N17. The helical transmembrane segment at 45 to 65 threads the bilayer; it reads LAYGAVIILGVSGNLALIIII. Residues 66-76 are Cytoplasmic-facing; sequence LKQKEMRNVTN. A helical membrane pass occupies residues 77–97; that stretch reads ILIVNLSFSDLLVAIMCLPFT. Residues 98 to 116 are Extracellular-facing; that stretch reads FVYTLMDHWVFGEAMCKLN. Residues C113 and C198 are joined by a disulfide bond. The helical transmembrane segment at 117–137 threads the bilayer; sequence PFVQCVSITVSIFSLVLIAVE. Residues 138–154 are Cytoplasmic-facing; sequence RHQLIINPRGWRPNNRH. The helical transmembrane segment at 155–175 threads the bilayer; that stretch reads AYVGIAVIWVLAVASSLPFLI. At 176 to 211 the chain is on the extracellular side; it reads YQVMTDEPFQNVTLDAYKDKYVCFDQFPSDSHRLSY. The helical transmembrane segment at 212 to 232 threads the bilayer; sequence TTLLLVLQYFGPLCFIFICYF. Residues 233–260 are Cytoplasmic-facing; sequence KIYIRLKRRNNMMDKMRDNKYRSSETKR. The helical transmembrane segment at 261–281 threads the bilayer; sequence INIMLLSIVVAFAVCWLPLTI. Residues 282–299 lie on the Extracellular side of the membrane; that stretch reads FNTVFDWNHQIIATCNHN. Residues 300-320 form a helical membrane-spanning segment; that stretch reads LLFLLCHLTAMISTCVNPIFY. At 321–384 the chain is on the cytoplasmic side; it reads GFLNKNFQRD…INNNDDNEKI (64 aa). Residue C338 is the site of S-palmitoyl cysteine attachment. S368 carries the post-translational modification Phosphoserine.

Belongs to the G-protein coupled receptor 1 family.

The protein localises to the cell membrane. Its function is as follows. Receptor for neuropeptide Y and peptide YY. The rank order of affinity of this receptor for pancreatic polypeptides is NPY &gt; [Pro-34] PYY, PYY and [Leu-31, Pro-34] NPY &gt; NPY (2-36) &gt; [Ile-31, Gln-34] PP and PYY (3-36) &gt; PP &gt; NPY free acid. The protein is Neuropeptide Y receptor type 1 (NPY1R) of Homo sapiens (Human).